Reading from the N-terminus, the 350-residue chain is Ion-translocating oxidoreductase complex subunit D (350 aa).

Helical transmembrane passes span 20–40 (IMMLVLIAALPGIATQLWFFG), 42–62 (GTLFQIILAAVSALAAEAAVL), 68–88 (PIAAILKDNSALLTGLLLAVS), 89–109 (IPPLAPWWMVVLGTVFAVIIA), and 123–143 (PAMIGYVVLLISFPVQMTSWL). FMN phosphoryl threonine is present on Thr-187. Transmembrane regions (helical) follow at residues 215–235 (LAGAGWQWVNIAWLIGGVWLL), 244–264 (IPVSFLVTLAVCSTLGWAFAG), 267–287 (LASPQLHLLSGATMLGAFFIL), 301–321 (LIFGALAGLLVWLIRSFGGYP), and 322–342 (DGVAFAVLLANITVPLIDYYT).

It belongs to the NqrB/RnfD family. In terms of assembly, the complex is composed of six subunits: RnfA, RnfB, RnfC, RnfD, RnfE and RnfG. FMN serves as cofactor.

The protein resides in the cell inner membrane. Its function is as follows. Part of a membrane-bound complex that couples electron transfer with translocation of ions across the membrane. The sequence is that of Ion-translocating oxidoreductase complex subunit D from Citrobacter koseri (strain ATCC BAA-895 / CDC 4225-83 / SGSC4696).